Consider the following 204-residue polypeptide: Probable proteasome subunit beta type-3 (204 aa).

It belongs to the peptidase T1B family. In terms of assembly, the 26S proteasome consists of a 20S proteasome core and two 19S regulatory subunits. The 20S proteasome core is composed of 28 subunits that are arranged in four stacked rings, resulting in a barrel-shaped structure. The two end rings are each formed by seven alpha subunits, and the two central rings are each formed by seven beta subunits. The catalytic chamber with the active sites is on the inside of the barrel.

Its subcellular location is the cytoplasm. It is found in the nucleus. Non-catalytic component of the proteasome, a multicatalytic proteinase complex which is characterized by its ability to cleave peptides with Arg, Phe, Tyr, Leu, and Glu adjacent to the leaving group at neutral or slightly basic pH. The proteasome has an ATP-dependent proteolytic activity. In Schizosaccharomyces pombe (strain 972 / ATCC 24843) (Fission yeast), this protein is Probable proteasome subunit beta type-3 (pup3).